Reading from the N-terminus, the 151-residue chain is Protein A151R (151 aa).

It belongs to the asfivirus A151R family. As to quaternary structure, monomer. Homodimer. Interacts with protein B119L. Interacts with membrane protein E248R. It depends on Zn(2+) as a cofactor.

May participate in a redox cascade for the formation of disulfide bonds in viral proteins. The sequence is that of Protein A151R from Ornithodoros (relapsing fever ticks).